The primary structure comprises 269 residues: Voltage-gated hydrogen channel 1 (269 aa).

The Cytoplasmic segment spans residues 1–96 (MTSHDPKAVT…RLRKLFSSHR (96 aa)). T29 bears the Phosphothreonine mark. Positions 46-79 (ENEEEEEEPAPTSAEGEGNAEGPDAEAGSASTPR) are disordered. Position 93 is a phosphoserine (S93). The chain crosses the membrane as a helical span at residues 97-117 (FQVIIICLVVLDALLVLAELL). Residues 118 to 134 (LDLKIIEPDEQDYAVTA) lie on the Extracellular side of the membrane. Residues 135 to 157 (FHYMSFAILVFFMLEIFFKIFVF) traverse the membrane as a helical segment. Residues 158–165 (RLEFFHHK) are Cytoplasmic-facing. The chain crosses the membrane as a helical span at residues 166–186 (FEILDAFVVVVSFVLDLVLLF). Residues 187–193 (KSHHFEA) lie on the Extracellular side of the membrane. Residues 194 to 214 (LGLLILLRLWRVARIINGIII) form a helical membrane-spanning segment. Residues 215 to 269 (SVKTRSERQILRLKQINIQLATKIQHLEFSCSEKEQEIERLNKLLKQNGLLGDVN) are Cytoplasmic-facing. The stretch at 221–261 (ERQILRLKQINIQLATKIQHLEFSCSEKEQEIERLNKLLKQ) forms a coiled coil.

It belongs to the voltage-gated proton channel (VPC) (TC 1.A.51) family. Homodimer; each protomer forms its own proton conduction pathway. Post-translationally, phosphorylated in vitro by PRKCD. Phosphorylation may enhance channel gating. Enriched in immune tissues, such as bone marrow, macrophages and spleen.

The protein resides in the cell membrane. It localises to the apical cell membrane. It is found in the cytoplasmic vesicle. The protein localises to the phagosome membrane. Its subcellular location is the cell projection. The protein resides in the cilium. It localises to the flagellum membrane. It carries out the reaction H(+)(in) = H(+)(out). The dimers display cooperative channel gating. The channel activity is inhibited by zinc ions. Functionally, voltage-gated proton-selective channel that conducts outward proton currents in response to intracellular acidification. Lacks a canonical ion-channel pore domain and mediates proton permeability via its voltage sensor domain. Provides for proton efflux that compensates for electron charge generated by NADPH oxidase activity either in the extracellular or phagosomal compartments, thus enabling the production of high levels of bactericidal reactive oxygen species during the respiratory burst. Opens when the pH of airway surface liquid exceeds 7 and contributes to respiratory epithelial acid secretion to maintain pH in the mucosa. The chain is Voltage-gated hydrogen channel 1 from Mus musculus (Mouse).